Reading from the N-terminus, the 657-residue chain is Transketolase (657 aa).

Histidine 31 is a binding site for substrate. Residues histidine 71 and 120–122 each bind thiamine diphosphate; that span reads GPL. Mg(2+) is bound at residue aspartate 158. The thiamine diphosphate site is built by glycine 159 and asparagine 188. Mg(2+) contacts are provided by asparagine 188 and isoleucine 190. Residues histidine 262, arginine 354, and serine 381 each contribute to the substrate site. Histidine 262 is a binding site for thiamine diphosphate. The active-site Proton donor is glutamate 408. Phenylalanine 434 is a binding site for thiamine diphosphate. Residues histidine 458, aspartate 466, and arginine 517 each coordinate substrate.

This sequence belongs to the transketolase family. As to quaternary structure, homodimer. Mg(2+) serves as cofactor. The cofactor is Ca(2+). Requires Mn(2+) as cofactor. Co(2+) is required as a cofactor. It depends on thiamine diphosphate as a cofactor.

The enzyme catalyses D-sedoheptulose 7-phosphate + D-glyceraldehyde 3-phosphate = aldehydo-D-ribose 5-phosphate + D-xylulose 5-phosphate. It functions in the pathway carbohydrate biosynthesis; Calvin cycle. The protein operates within carbohydrate degradation; pentose phosphate pathway. Its function is as follows. Catalyzes the transfer of a two-carbon ketol group from a ketose donor to an aldose acceptor, via a covalent intermediate with the cofactor thiamine pyrophosphate. The polypeptide is Transketolase (tklB) (Cereibacter sphaeroides (Rhodobacter sphaeroides)).